The sequence spans 141 residues: Hemoglobin subunit alpha (141 aa).

The Globin domain occupies 1-141; the sequence is VLSGEDKNNI…VSTVLTSKYR (141 aa). Ser3 is subject to Phosphoserine. Lys7 and Lys11 each carry N6-succinyllysine. Lys16 carries the N6-acetyllysine; alternate modification. At Lys16 the chain carries N6-succinyllysine; alternate. Phosphotyrosine is present on Tyr24. N6-succinyllysine is present on Lys40. Phosphoserine is present on Ser49. His58 provides a ligand contact to O2. His87 lines the heme b pocket. The residue at position 102 (Ser102) is a Phosphoserine. Thr108 bears the Phosphothreonine mark. Residues Ser124 and Ser131 each carry the phosphoserine modification. 2 positions are modified to phosphothreonine: Thr134 and Thr137. Phosphoserine is present on Ser138.

The protein belongs to the globin family. Heterotetramer of two alpha chains and two beta chains. In terms of tissue distribution, red blood cells.

Functionally, involved in oxygen transport from the lung to the various peripheral tissues. Its function is as follows. Hemopressin acts as an antagonist peptide of the cannabinoid receptor CNR1. Hemopressin-binding efficiently blocks cannabinoid receptor CNR1 and subsequent signaling. The sequence is that of Hemoglobin subunit alpha (HBA) from Ondatra zibethicus (Muskrat).